Here is a 586-residue protein sequence, read N- to C-terminus: Zinc finger protein Eos (586 aa).

Disordered stretches follow at residues 1 to 42 and 68 to 98; these read MHTP…APDF and EKEFLGAPVGPSVSTPNSQHSSPSRSLSANS. The span at 25 to 34 shows a compositional bias: basic and acidic residues; it reads QGKDNLEREL. Polar residues predominate over residues 79-98; sequence SVSTPNSQHSSPSRSLSANS. A Glycyl lysine isopeptide (Lys-Gly) (interchain with G-Cter in SUMO2) cross-link involves residue Lys100. A Phosphoserine modification is found at Ser105. 4 C2H2-type zinc fingers span residues 159–181, 187–209, 215–237, and 248–271; these read LKCDVCGMVCIGPNVLMVHKRSH, FHCNQCGASFTQKGNLLRHIKLH, FKCPFCNYACRRRDALTGHLRTH, and YKCNYCGRSYKQQSTLEEHKERCH. Residues 281–586 are interaction with FOXP3; sequence AQALTGQPGD…HIVRGEHKVG (306 aa). Lys335 carries the post-translational modification N6-acetyllysine. A disordered region spans residues 413–490; the sequence is RLELPGSREA…QPPPTIVVGR (78 aa). The CTBP-binding motif PEDLG signature appears at 423–433; it reads GEGPEDLGDGG. The segment covering 476 to 485 has biased composition (pro residues); the sequence is QGPPPQPPPT. Lys501 is covalently cross-linked (Glycyl lysine isopeptide (Lys-Gly) (interchain with G-Cter in SUMO2)). C2H2-type zinc fingers lie at residues 531–553 and 559–583; these read FKCEHCRILFLDHVMFTIHMGCH and FECNICGYHSQDRYEFSSHIVRGEH.

This sequence belongs to the Ikaros C2H2-type zinc-finger protein family. As to quaternary structure, self-associates. Interacts with other family members; IKZF1, IKZF2, IKZF3 and IKZF5. Interacts with CTBP2, SPI1 and MITF. Interacts with FOXP3 and CTBP1. As to expression, expressed mainly in the brain. Up-regulated in long term cultured astrocytes. Down-regulated during osteoclast differentiation.

It localises to the nucleus. DNA-binding protein that binds to the 5'GGGAATRCC-3' Ikaros-binding sequence. Interacts with SPI1 and MITF to repress transcription of the CTSK and ACP5 promoters via recruitment of corepressors SIN3A and CTBP2. May be involved in the development of central and peripheral nervous systems. Essential for the inhibitory function of regulatory T-cells (Treg). Mediates FOXP3-mediated gene silencing in regulatory T-cells (Treg) via recruitment of corepressor CTBP1. The protein is Zinc finger protein Eos (Ikzf4) of Mus musculus (Mouse).